The following is a 96-amino-acid chain: Co-chaperonin GroES (96 aa).

It belongs to the GroES chaperonin family. Heptamer of 7 subunits arranged in a ring. Interacts with the chaperonin GroEL.

The protein localises to the cytoplasm. Its function is as follows. Together with the chaperonin GroEL, plays an essential role in assisting protein folding. The GroEL-GroES system forms a nano-cage that allows encapsulation of the non-native substrate proteins and provides a physical environment optimized to promote and accelerate protein folding. GroES binds to the apical surface of the GroEL ring, thereby capping the opening of the GroEL channel. This Buchnera aphidicola subsp. Schizaphis graminum (strain Sg) protein is Co-chaperonin GroES.